We begin with the raw amino-acid sequence, 938 residues long: Respiratory burst oxidase homolog protein C (938 aa).

The segment at 1–63 is disordered; sequence MQNSENHHPH…DIGTSAGAGA (63 aa). Topologically, residues 1–369 are cytoplasmic; it reads MQNSENHHPH…MYFLLDNWQR (369 aa). The stretch at 115-141 forms a coiled coil; the sequence is ASLVRNASSRIRQVSQELKRLASLNKR. EF-hand-like stretches follow at residues 185–195 and 222–233; these read TAPTTGLLPRA and RNITTDSINKAQ. 2 EF-hand domains span residues 245 to 280 and 289 to 324; these read SFDT…SASA and QSDE…APNQ. Residues Asp258, Asp260, Asp262, Arg264, and Glu269 each coordinate Ca(2+). The helical transmembrane segment at 370–390 threads the bilayer; that stretch reads VWVLLLWIGIMAVLFTWKYIQ. The Extracellular segment spans residues 391–402; sequence YKQKAAYDVMGP. Residues 403-423 form a helical membrane-spanning segment; that stretch reads CVCLAKGAAETIKLNMAIILL. In terms of domain architecture, Ferric oxidoreductase spans 408-565; the sequence is KGAAETIKLN…LFIIVYTLLI (158 aa). Residues 424 to 454 lie on the Cytoplasmic side of the membrane; it reads PVCRNTITWLRNKTRLGSAVPFDDNLNFHKV. A helical membrane pass occupies residues 455–475; sequence IAVAIALGVAIHGLAHLTCDF. Residues 476–509 lie on the Extracellular side of the membrane; sequence PKLLNASEEAYEPMIYYFGEQPESYWWFVRGVEG. A helical membrane pass occupies residues 510–530; the sequence is VTGIIMVVLMAIAFTLATPWF. The Cytoplasmic portion of the chain corresponds to 531–545; the sequence is RRGRVSFPKPFHKLT. Residues 546–566 traverse the membrane as a helical segment; that stretch reads GFNAFWYSHHLFIIVYTLLIV. At 567-580 the chain is on the extracellular side; it reads HGEKLYITKDWYKR. The helical transmembrane segment at 581-599 threads the bilayer; it reads STWMYLTVPLVLYAGERLL. The FAD-binding FR-type domain occupies 599 to 727; it reads LRAFRSSIKA…DGPYGAPAQD (129 aa). Over 600–732 the chain is Cytoplasmic; that stretch reads RAFRSSIKAV…APAQDYKQYE (133 aa). The chain crosses the membrane as a helical span at residues 733-753; sequence VVLLVGLGIGATPMISIVKDI. Over 754 to 938 the chain is Extracellular; sequence VNNMKAMDEE…TKFDFHKENF (185 aa). The segment at 762–796 is disordered; it reads EEENSLENGNGMSNAAQNASPNMAQKRGKSSSASG. The span at 767–784 shows a compositional bias: polar residues; sequence LENGNGMSNAAQNASPNM.

It belongs to the RBOH (TC 5.B.1.3) family. As to quaternary structure, monomer and homodimer. In terms of processing, phosphorylated by CPK. Expressed in leaves.

The protein resides in the membrane. Its function is as follows. Calcium-dependent NADPH oxidase that generates superoxide. May be responsible for the oxidative burst in response to pathogen attack in the leaves. This is Respiratory burst oxidase homolog protein C (RBOHC) from Solanum tuberosum (Potato).